A 555-amino-acid chain; its full sequence is Zinc finger and SCAN domain-containing protein 21 (555 aa).

Disordered regions lie at residues 1–74, 102–133, 204–243, and 263–354; these read MTKV…SKDK, TIKA…YHDT, LDEP…TQHV, and EEVF…RPAP. Repeat copies occupy residues 18-56, 57-95, and 96-134. The interval 18-134 is 3 X 39 AA approximate tandem repeats; that stretch reads ESMGPSPIKV…FRQFGYHDTP (117 aa). Residue Lys26 forms a Glycyl lysine isopeptide (Lys-Gly) (interchain with G-Cter in SUMO2) linkage. An SCAN box domain is found at 122–204; that stretch reads RQRFRQFGYH…TLLEDLEQEL (83 aa). Residues 210-240 show a composition bias toward polar residues; sequence QVSSPPNEQKQSWEKMSTSGTAMESLSSTET. Positions 280 to 302 are enriched in basic and acidic residues; that stretch reads PQKEDSADEHRSSEEESHADGLK. Glycyl lysine isopeptide (Lys-Gly) (interchain with G-Cter in SUMO2) cross-links involve residues Lys302 and Lys313. Over residues 316–332 the composition is skewed to basic and acidic residues; the sequence is SRSERQWANNLERERGT. C2H2-type zinc fingers lie at residues 359 to 381, 387 to 409, 415 to 436, 442 to 464, 470 to 492, 498 to 520, and 526 to 548; these read YICA…RRTH, YVCT…YRTH, YDCK…QRMH, YQCK…YRIH, YQCN…QRLH, YKCK…HRIH, and YWCS…QRVH. Residue Lys431 forms a Glycyl lysine isopeptide (Lys-Gly) (interchain with G-Cter in SUMO2) linkage.

This sequence belongs to the krueppel C2H2-type zinc-finger protein family. As to expression, expressed predominantly in the spermatocytes and spermatids of adult testes. It is also present at lower levels in the ovary, brain, spleen, embryo and fetus.

Its subcellular location is the nucleus. In terms of biological role, strong transcriptional activator. Plays an important role in spermatogenesis; essential for the progression of meiotic prophase I in spermatocytes. The sequence is that of Zinc finger and SCAN domain-containing protein 21 (Zscan21) from Mus musculus (Mouse).